The sequence spans 268 residues: Thiazole synthase (268 aa).

Lys-96 serves as the catalytic Schiff-base intermediate with DXP. 1-deoxy-D-xylulose 5-phosphate contacts are provided by residues Gly-157, 185–186, and 207–208; these read AG and NT. The segment at 238–268 is disordered; sequence PMRPREAASPSSPVEGVPFTPTGPRPGRGPQ. Positions 258–268 are enriched in pro residues; the sequence is PTGPRPGRGPQ.

It belongs to the ThiG family. Homotetramer. Forms heterodimers with either ThiH or ThiS.

The protein resides in the cytoplasm. The catalysed reaction is [ThiS sulfur-carrier protein]-C-terminal-Gly-aminoethanethioate + 2-iminoacetate + 1-deoxy-D-xylulose 5-phosphate = [ThiS sulfur-carrier protein]-C-terminal Gly-Gly + 2-[(2R,5Z)-2-carboxy-4-methylthiazol-5(2H)-ylidene]ethyl phosphate + 2 H2O + H(+). Its pathway is cofactor biosynthesis; thiamine diphosphate biosynthesis. Its function is as follows. Catalyzes the rearrangement of 1-deoxy-D-xylulose 5-phosphate (DXP) to produce the thiazole phosphate moiety of thiamine. Sulfur is provided by the thiocarboxylate moiety of the carrier protein ThiS. In vitro, sulfur can be provided by H(2)S. This chain is Thiazole synthase, found in Thermus thermophilus (strain ATCC 27634 / DSM 579 / HB8).